The following is a 490-amino-acid chain: Actin-related protein 6 (490 aa).

Belongs to the actin family. ARP6 subfamily.

The protein resides in the cytoplasm. It is found in the cytoskeleton. This Dictyostelium discoideum (Social amoeba) protein is Actin-related protein 6.